A 165-amino-acid chain; its full sequence is MMQLSNDSHCNKHSLLNVMNRFIAAANNMDETIMVPNLLRDVPLEDQESHASVSHNNNNNNEPSFPNKQRDMYEHYLLLKSIKNDMEWGLLKREMAGGASFLEMAVKQEELPQMKGEAVEEGPDLEGQFHYHLHGLFSVLSKLTVQADHLTNRYKREIGGGSLLR.

The interval 46–67 (DQESHASVSHNNNNNNEPSFPN) is disordered.

This sequence belongs to the SPOT14 family.

It localises to the nucleus. Its subcellular location is the cytoplasm. It is found in the cytoskeleton. Its function is as follows. Involved in stabilization of microtubules. May play a role in the regulation of lipogenesis. This Danio rerio (Zebrafish) protein is Mid1-interacting protein 1-like.